The chain runs to 338 residues: 4-hydroxythreonine-4-phosphate dehydrogenase (338 aa).

Positions 136 and 137 each coordinate substrate. A divalent metal cation is bound by residues H173, H218, and H273. Substrate is bound by residues K281, N290, and R299.

This sequence belongs to the PdxA family. Homodimer. The cofactor is Zn(2+). Mg(2+) serves as cofactor. It depends on Co(2+) as a cofactor.

The protein resides in the cytoplasm. It carries out the reaction 4-(phosphooxy)-L-threonine + NAD(+) = 3-amino-2-oxopropyl phosphate + CO2 + NADH. It participates in cofactor biosynthesis; pyridoxine 5'-phosphate biosynthesis; pyridoxine 5'-phosphate from D-erythrose 4-phosphate: step 4/5. Catalyzes the NAD(P)-dependent oxidation of 4-(phosphooxy)-L-threonine (HTP) into 2-amino-3-oxo-4-(phosphooxy)butyric acid which spontaneously decarboxylates to form 3-amino-2-oxopropyl phosphate (AHAP). This Ralstonia nicotianae (strain ATCC BAA-1114 / GMI1000) (Ralstonia solanacearum) protein is 4-hydroxythreonine-4-phosphate dehydrogenase.